The chain runs to 70 residues: uncharacterized protein (70 aa).

The protein resides in the plastid. It localises to the chloroplast. This is an uncharacterized protein from Mesostigma viride (Green alga).